Consider the following 309-residue polypeptide: Cytidine deaminase (309 aa).

CMP/dCMP-type deaminase domains are found at residues 48–168 (DEDA…FGPR) and 200–309 (DDND…SLSL). Position 89–91 (89–91 (NME)) interacts with substrate. Residue H102 participates in Zn(2+) binding. E104 acts as the Proton donor in catalysis. Zn(2+)-binding residues include C129 and C132.

The protein belongs to the cytidine and deoxycytidylate deaminase family. In terms of assembly, homodimer. Requires Zn(2+) as cofactor.

It carries out the reaction cytidine + H2O + H(+) = uridine + NH4(+). The catalysed reaction is 2'-deoxycytidine + H2O + H(+) = 2'-deoxyuridine + NH4(+). Its function is as follows. This enzyme scavenges exogenous and endogenous cytidine and 2'-deoxycytidine for UMP synthesis. This chain is Cytidine deaminase, found in Sodalis glossinidius (strain morsitans).